The primary structure comprises 355 residues: UDP-N-acetylglucosamine--N-acetylmuramyl-(pentapeptide) pyrophosphoryl-undecaprenol N-acetylglucosamine transferase (355 aa).

UDP-N-acetyl-alpha-D-glucosamine is bound by residues 14 to 16 (TGG), N123, R164, S190, and Q284.

Belongs to the glycosyltransferase 28 family. MurG subfamily.

The protein localises to the cell inner membrane. It carries out the reaction di-trans,octa-cis-undecaprenyl diphospho-N-acetyl-alpha-D-muramoyl-L-alanyl-D-glutamyl-meso-2,6-diaminopimeloyl-D-alanyl-D-alanine + UDP-N-acetyl-alpha-D-glucosamine = di-trans,octa-cis-undecaprenyl diphospho-[N-acetyl-alpha-D-glucosaminyl-(1-&gt;4)]-N-acetyl-alpha-D-muramoyl-L-alanyl-D-glutamyl-meso-2,6-diaminopimeloyl-D-alanyl-D-alanine + UDP + H(+). It participates in cell wall biogenesis; peptidoglycan biosynthesis. Functionally, cell wall formation. Catalyzes the transfer of a GlcNAc subunit on undecaprenyl-pyrophosphoryl-MurNAc-pentapeptide (lipid intermediate I) to form undecaprenyl-pyrophosphoryl-MurNAc-(pentapeptide)GlcNAc (lipid intermediate II). This chain is UDP-N-acetylglucosamine--N-acetylmuramyl-(pentapeptide) pyrophosphoryl-undecaprenol N-acetylglucosamine transferase, found in Synechocystis sp. (strain ATCC 27184 / PCC 6803 / Kazusa).